The sequence spans 123 residues: Large ribosomal subunit protein uL14 (123 aa).

It belongs to the universal ribosomal protein uL14 family. In terms of assembly, part of the 50S ribosomal subunit. Forms a cluster with proteins L3 and L19. In the 70S ribosome, L14 and L19 interact and together make contacts with the 16S rRNA in bridges B5 and B8.

Its function is as follows. Binds to 23S rRNA. Forms part of two intersubunit bridges in the 70S ribosome. The chain is Large ribosomal subunit protein uL14 from Vibrio cholerae serotype O1 (strain ATCC 39541 / Classical Ogawa 395 / O395).